We begin with the raw amino-acid sequence, 427 residues long: Glutamate-1-semialdehyde 2,1-aminomutase (427 aa).

Position 265 is an N6-(pyridoxal phosphate)lysine (Lys-265).

This sequence belongs to the class-III pyridoxal-phosphate-dependent aminotransferase family. HemL subfamily. As to quaternary structure, homodimer. Pyridoxal 5'-phosphate is required as a cofactor.

It localises to the cytoplasm. The enzyme catalyses (S)-4-amino-5-oxopentanoate = 5-aminolevulinate. It functions in the pathway porphyrin-containing compound metabolism; protoporphyrin-IX biosynthesis; 5-aminolevulinate from L-glutamyl-tRNA(Glu): step 2/2. This chain is Glutamate-1-semialdehyde 2,1-aminomutase, found in Pasteurella multocida (strain Pm70).